The following is a 1020-amino-acid chain: Valine--tRNA ligase (1020 aa).

The 'HIGH' region motif lies at 45 to 55 (PNVTGALHVGH). The 'KMSKS' region motif lies at 661 to 665 (KMSKT). ATP is bound at residue lysine 664. Residues 955-1020 (AEKDRLEKAK…EALARLAELG (66 aa)) are a coiled coil.

It belongs to the class-I aminoacyl-tRNA synthetase family. ValS type 1 subfamily. In terms of assembly, monomer.

The protein resides in the cytoplasm. The catalysed reaction is tRNA(Val) + L-valine + ATP = L-valyl-tRNA(Val) + AMP + diphosphate. Catalyzes the attachment of valine to tRNA(Val). As ValRS can inadvertently accommodate and process structurally similar amino acids such as threonine, to avoid such errors, it has a 'posttransfer' editing activity that hydrolyzes mischarged Thr-tRNA(Val) in a tRNA-dependent manner. The protein is Valine--tRNA ligase of Ruegeria pomeroyi (strain ATCC 700808 / DSM 15171 / DSS-3) (Silicibacter pomeroyi).